The following is a 261-amino-acid chain: Cytosolic Fe-S cluster assembly factor Nubp2 homolog (261 aa).

An ATP-binding site is contributed by 14-21 (GKGGVGKS). The [4Fe-4S] cluster site is built by cysteine 188 and cysteine 191.

It belongs to the Mrp/NBP35 ATP-binding proteins family. NUBP2/CFD1 subfamily. In terms of assembly, heterotetramer of 2 Nubp1 and 2 Nubp2 chains. It depends on [4Fe-4S] cluster as a cofactor.

It localises to the cytoplasm. Its function is as follows. Component of the cytosolic iron-sulfur (Fe/S) protein assembly (CIA) machinery. Required for maturation of extramitochondrial Fe-S proteins. The Nubp1-Nubp2 heterotetramer forms a Fe-S scaffold complex, mediating the de novo assembly of an Fe-S cluster and its transfer to target apoproteins. The protein is Cytosolic Fe-S cluster assembly factor Nubp2 homolog of Drosophila ananassae (Fruit fly).